A 352-amino-acid chain; its full sequence is Ion-translocating oxidoreductase complex subunit D (352 aa).

Helical transmembrane passes span 20–40 (IMLLVLLAAVPGIAAQLWFFG), 42–62 (GTLVQILLASVSALLAEALVL), 78–109 (ALLTGLLLAVSIPPLAPWWMVVLGTVFAVIIA), 123–143 (PAMIGYVVLLISFPVQMTSWL), and 148–168 (IAVNIPGFIDAIQVIFSGHTA). FMN phosphoryl threonine is present on Thr-187. 5 helical membrane passes run 214 to 234 (ILAGAGWQWVNLAWLAGGVWL), 242 to 262 (WHIPLSFLVTLALCATLGWLF), 267 to 287 (LAAPQIHLLSGATMLGAFFIL), 301 to 321 (LIFGALAGLLVWLIRSFGGYP), and 322 to 342 (DGVAFAVLLANITVPLIDYYT).

Belongs to the NqrB/RnfD family. In terms of assembly, the complex is composed of six subunits: RsxA, RsxB, RsxC, RsxD, RsxE and RsxG. FMN serves as cofactor.

It is found in the cell inner membrane. Part of a membrane-bound complex that couples electron transfer with translocation of ions across the membrane. Required to maintain the reduced state of SoxR. In Escherichia coli O157:H7, this protein is Ion-translocating oxidoreductase complex subunit D.